An 82-amino-acid chain; its full sequence is UPF0213 protein SERP0126 (82 aa).

The GIY-YIG domain occupies 2–77; it reads DKHFVYIVKC…KTYTRQQKLK (76 aa).

The protein belongs to the UPF0213 family.

The chain is UPF0213 protein SERP0126 from Staphylococcus epidermidis (strain ATCC 35984 / DSM 28319 / BCRC 17069 / CCUG 31568 / BM 3577 / RP62A).